The following is a 209-amino-acid chain: Inorganic pyrophosphatase (209 aa).

Substrate-binding residues include Lys-38, Arg-52, and Tyr-64. Mg(2+) is bound by residues Asp-92, Asp-97, and Asp-130. Tyr-167 contacts substrate.

Belongs to the PPase family. As to quaternary structure, homohexamer. Mg(2+) serves as cofactor.

It is found in the cytoplasm. It carries out the reaction diphosphate + H2O = 2 phosphate + H(+). Catalyzes the hydrolysis of inorganic pyrophosphate (PPi) forming two phosphate ions. This is Inorganic pyrophosphatase from Chlamydia muridarum (strain MoPn / Nigg).